The following is a 137-amino-acid chain: Phosphoribosyl-AMP cyclohydrolase (137 aa).

Residue aspartate 84 coordinates Mg(2+). Position 85 (cysteine 85) interacts with Zn(2+). Aspartate 86 and aspartate 88 together coordinate Mg(2+). Zn(2+) is bound by residues cysteine 101 and cysteine 108.

It belongs to the PRA-CH family. Homodimer. Requires Mg(2+) as cofactor. Zn(2+) serves as cofactor.

The protein localises to the cytoplasm. The catalysed reaction is 1-(5-phospho-beta-D-ribosyl)-5'-AMP + H2O = 1-(5-phospho-beta-D-ribosyl)-5-[(5-phospho-beta-D-ribosylamino)methylideneamino]imidazole-4-carboxamide. It functions in the pathway amino-acid biosynthesis; L-histidine biosynthesis; L-histidine from 5-phospho-alpha-D-ribose 1-diphosphate: step 3/9. Functionally, catalyzes the hydrolysis of the adenine ring of phosphoribosyl-AMP. The chain is Phosphoribosyl-AMP cyclohydrolase from Chlorobium chlorochromatii (strain CaD3).